The chain runs to 206 residues: Large ribosomal subunit protein uL4 (206 aa).

Residues 47–77 are disordered; sequence GTHDTKTRGEVSGGGRKPWRQKGTGRARHGS. The segment covering 63–77 has biased composition (basic residues); sequence KPWRQKGTGRARHGS.

This sequence belongs to the universal ribosomal protein uL4 family. In terms of assembly, part of the 50S ribosomal subunit.

In terms of biological role, one of the primary rRNA binding proteins, this protein initially binds near the 5'-end of the 23S rRNA. It is important during the early stages of 50S assembly. It makes multiple contacts with different domains of the 23S rRNA in the assembled 50S subunit and ribosome. Its function is as follows. Forms part of the polypeptide exit tunnel. This Carboxydothermus hydrogenoformans (strain ATCC BAA-161 / DSM 6008 / Z-2901) protein is Large ribosomal subunit protein uL4.